A 1447-amino-acid chain; its full sequence is Regulator of G-protein signaling 12 (1447 aa).

A disordered region spans residues 1 to 21 (MFRAGEASKRPLPGPSPPRVR). The region spanning 22–98 (SVEVARGRAG…GVLHMVIAEG (77 aa)) is the PDZ domain. A phosphoserine mark is found at S172 and S195. Residue K196 forms a Glycyl lysine isopeptide (Lys-Gly) (interchain with G-Cter in SUMO2) linkage. The PID domain occupies 228 to 340 (VAMIVGYLGS…GALRTSCHVF (113 aa)). Disordered regions lie at residues 410 to 429 (ADAH…IGNF) and 443 to 482 (LGGS…DPEG). Over residues 413–425 (HQNNSTSSNSDSG) the composition is skewed to polar residues. Positions 451–464 (GPGGSAWDGVGGRG) are enriched in gly residues. An omega-N-methylarginine mark is found at R524 and R633. The tract at residues 618-652 (NVRKTKEDKKGSKFGRGTGLTQPSQRTSARRSFGR) is disordered. A phosphoserine mark is found at S661 and S671. An RGS domain is found at 715-832 (SFERLLQDPV…LKSPLYQECI (118 aa)). The span at 843 to 853 (DSQQVPSSPAS) shows a compositional bias: polar residues. Residues 843-941 (DSQQVPSSPA…RESQGSVSSA (99 aa)) are disordered. Residues S850 and S879 each carry the phosphoserine modification. Residues 914–923 (EHGDHADDAL) show a composition bias toward basic and acidic residues. S943 carries the post-translational modification Phosphoserine. 2 consecutive RBD domains span residues 962–1032 (KHCC…LEKR) and 1034–1104 (LFRL…LEEK). The segment covering 1103-1117 (EKDPSRGKASADKQK) has biased composition (basic and acidic residues). The interval 1103-1169 (EKDPSRGKAS…RDPRLSKREE (67 aa)) is disordered. Positions 1122–1136 (KQNTAVNSSSRNHSA) are enriched in polar residues. A compositionally biased stretch (basic and acidic residues) spans 1151–1169 (IKGENGKNARDPRLSKREE). Residues 1187-1209 (AEEFFELISKAQSNRADDQRGLL) enclose the GoLoco domain. The segment at 1240–1447 (GFSKRSATGN…KTSAHHATFV (208 aa)) is disordered. Over residues 1244–1258 (RSATGNGRESASQPG) the composition is skewed to polar residues. Low complexity-rich tracts occupy residues 1267–1280 (SSDS…SASS) and 1289–1298 (PPGQKSPSGP). Residues 1301-1313 (TPQSPVSLAQEGT) are compositionally biased toward polar residues.

In terms of assembly, interacts with GNAI1. Interacts with GNAI2 and GNAI3; the interactions are GDP-dependent. Isoform 3 is brain specific.

Its subcellular location is the nucleus. The protein resides in the cytoplasm. The protein localises to the cell projection. It localises to the dendrite. It is found in the synapse. Its subcellular location is the nucleus matrix. Functionally, regulates G protein-coupled receptor signaling cascades. Inhibits signal transduction by increasing the GTPase activity of G protein alpha subunits, thereby driving them into their inactive GDP-bound form. In terms of biological role, behaves as a cell cycle-dependent transcriptional repressor, promoting inhibition of S-phase DNA synthesis. This Homo sapiens (Human) protein is Regulator of G-protein signaling 12 (RGS12).